The primary structure comprises 416 residues: 2,3-bisphosphoglycerate-independent phosphoglycerate mutase (416 aa).

The protein belongs to the BPG-independent phosphoglycerate mutase family. A-PGAM subfamily.

The enzyme catalyses (2R)-2-phosphoglycerate = (2R)-3-phosphoglycerate. The protein operates within carbohydrate degradation; glycolysis; pyruvate from D-glyceraldehyde 3-phosphate: step 3/5. In terms of biological role, catalyzes the interconversion of 2-phosphoglycerate and 3-phosphoglycerate. The chain is 2,3-bisphosphoglycerate-independent phosphoglycerate mutase from Ignicoccus hospitalis (strain KIN4/I / DSM 18386 / JCM 14125).